The primary structure comprises 509 residues: Taxoid 14-beta-hydroxylase (509 aa).

3 consecutive transmembrane segments (helical) span residues 20 to 40, 186 to 206, and 218 to 238; these read AILF…LLFL, SVVA…FFNI, and LLEI…GFAY. A heme-binding site is contributed by cysteine 443.

This sequence belongs to the cytochrome P450 family.

The protein resides in the microsome membrane. The enzyme catalyses 10beta-hydroxytaxa-4(20),11-dien-5alpha-yl acetate + NADPH + O2 + H(+) = 10beta,14beta-dihydroxytaxa-4(20),11-dien-5alpha-yl acetate + NADP(+) + H2O. The protein operates within alkaloid biosynthesis; taxol biosynthesis. Catalyzes the conversion of 5-alpha-acetoxy-10beta-ol to 5-alpha-acetoxy-10beta,14beta-dihydroxy taxadiene. Also acts on taxa-4(20),11-dien-5-alpha-yl acetate. This Taxus cuspidata (Japanese yew) protein is Taxoid 14-beta-hydroxylase.